Here is a 329-residue protein sequence, read N- to C-terminus: Ribosomal RNA small subunit methyltransferase H (329 aa).

S-adenosyl-L-methionine is bound by residues 39–41 (GGY), aspartate 57, phenylalanine 84, aspartate 100, and glutamine 107. The tract at residues 285–305 (GPDKDELAQNPRSRSALLRVG) is disordered.

It belongs to the methyltransferase superfamily. RsmH family.

Its subcellular location is the cytoplasm. The catalysed reaction is cytidine(1402) in 16S rRNA + S-adenosyl-L-methionine = N(4)-methylcytidine(1402) in 16S rRNA + S-adenosyl-L-homocysteine + H(+). In terms of biological role, specifically methylates the N4 position of cytidine in position 1402 (C1402) of 16S rRNA. This chain is Ribosomal RNA small subunit methyltransferase H, found in Ruegeria sp. (strain TM1040) (Silicibacter sp.).